The sequence spans 365 residues: Homeobox protein Nkx-6.1 (365 aa).

A disordered region spans residues 35–136 (LYPAAYPPLP…SSSSASATSA (102 aa)). 3 stretches are compositionally biased toward low complexity: residues 48-59 (PSSSSSSSSSSS), 69-92 (PGGL…QLSA), and 110-136 (ASGA…ATSA). The tract at residues 102–269 (LSRPSMPVAS…KYLAGPERAR (168 aa)) is repressor domain. Arginine 190 is subject to Asymmetric dimethylarginine. A DNA-binding region (homeobox) is located at residues 237–296 (RKHTRPTFSGQQIFALEKTFEQTKYLAGPERARLAYSLGMTESQVKVWFQNRRTKWRKKH). Positions 295-365 (KHAAEMATAK…LHASEAEGSS (71 aa)) are disordered. The segment covering 305 to 318 (KKQDSETERLKGTS) has biased composition (basic and acidic residues). Residues 307–365 (QDSETERLKGTSENEEDDDDYNKPLDPNSDDEKITQLLKKHKSSGGSLLLHASEAEGSS) are involved in DNA-binding.

In terms of tissue distribution, pancreatic beta cells.

Its subcellular location is the nucleus. Functionally, transcription factor which binds to specific A/T-rich DNA sequences in the promoter regions of a number of genes. Involved in the development of insulin-producing beta cells in the islets of Langerhans at the secondary transition. Together with NKX2-2 and IRX3 acts to restrict the generation of motor neurons to the appropriate region of the neural tube. Belongs to the class II proteins of neuronal progenitor factors, which are induced by SHH signals. This Rattus norvegicus (Rat) protein is Homeobox protein Nkx-6.1 (Nkx6-1).